The primary structure comprises 503 residues: Zinc-regulated transporter 3 (503 aa).

Helical transmembrane passes span 8 to 28, 42 to 62, and 75 to 95; these read LLFSLISSVLCILGALCVPLL, LVNYGLSLSAGSMITTSLYML, and FPGLLLGICLSFFLNYLVHAF. Positions 112–171 are disordered; it reads GSHIHSKSHSHSHSHSHADSHSNFSNDHDLENAPSEHGYATSSSSVSENDPLITKDSDRP. Over residues 115 to 126 the composition is skewed to basic residues; that stretch reads IHSKSHSHSHSH. A compositionally biased stretch (basic and acidic residues) spans 127 to 142; the sequence is SHADSHSNFSNDHDLE. Phosphoserine occurs at positions 178 and 188. Disordered stretches follow at residues 221–244 and 274–295; these read QSERNVPHGCEGSEDNGQSDDKDH and HHSSESPENYGSNQLSHSFSSP. Residues 280–295 show a composition bias toward polar residues; it reads PENYGSNQLSHSFSSP. A run of 5 helical transmembrane segments spans residues 336–356, 371–391, 398–418, 438–458, and 482–502; these read IGMQTCLVLALHKFPEGFIIF, IFLSLTIHNFVEGFAMTLPFY, WVAILITAVLGGGSQPLGALI, LLSVTAGFLLVIGLQMFQTGI, and GTTCLKWCCTGVLLILASALF.

The protein belongs to the ZIP transporter (TC 2.A.5) family.

Its subcellular location is the vacuole membrane. Its function is as follows. Transports zinc from storage in the vacuole to the cytoplasm. The polypeptide is Zinc-regulated transporter 3 (ZRT3) (Saccharomyces cerevisiae (strain ATCC 204508 / S288c) (Baker's yeast)).